Consider the following 219-residue polypeptide: Thiopurine S-methyltransferase (219 aa).

Residues Trp-10, Leu-45, Glu-66, and Arg-123 each contribute to the S-adenosyl-L-methionine site.

Belongs to the class I-like SAM-binding methyltransferase superfamily. TPMT family.

It localises to the cytoplasm. The enzyme catalyses S-adenosyl-L-methionine + a thiopurine = S-adenosyl-L-homocysteine + a thiopurine S-methylether.. The sequence is that of Thiopurine S-methyltransferase from Bordetella pertussis (strain Tohama I / ATCC BAA-589 / NCTC 13251).